Reading from the N-terminus, the 636-residue chain is Protein BCAP (636 aa).

Coiled coils occupy residues 36–97 (LSCL…EQKE), 141–220 (ESEN…WNLQ), 249–325 (YKQR…HGKN), 377–484 (ISSE…ECQE), and 519–631 (LEEE…KMNS).

It belongs to the ODF2 family. As to expression, mainly expressed in trachea and testis. Not detected in bone marrow, bladder, leukocytes. Only weakly detected in tongue, stomach, brain and ovaries.

It is found in the cytoplasm. The protein resides in the cytoskeleton. The protein localises to the microtubule organizing center. Its subcellular location is the centrosome. It localises to the centriole. It is found in the centriolar satellite. The protein resides in the cilium basal body. In terms of biological role, acts as a suppressor of ciliogenesis, specifically, the initiation of ciliogenesis. The protein is Protein BCAP of Homo sapiens (Human).